A 323-amino-acid polypeptide reads, in one-letter code: Ubiquinone biosynthesis protein COQ4, mitochondrial (323 aa).

The transit peptide at 1–29 (MLKSTVSNTRIKCCRIDQRRNYLFTALAS) directs the protein to the mitochondrion. Positions 205, 206, 209, and 221 each coordinate Zn(2+).

The protein belongs to the COQ4 family. As to quaternary structure, component of a multi-subunit COQ enzyme complex, composed of at least COQ3, COQ4, COQ5, COQ6, COQ7 and COQ9. The cofactor is Zn(2+).

It is found in the mitochondrion inner membrane. It carries out the reaction a 4-hydroxy-3-methoxy-5-(all-trans-polyprenyl)benzoate + H(+) = a 2-methoxy-6-(all-trans-polyprenyl)phenol + CO2. Its pathway is cofactor biosynthesis; ubiquinone biosynthesis. Functionally, lyase that catalyzes the C1-decarboxylation of 4-hydroxy-3-methoxy-5-(all-trans-polyprenyl)benzoic acid into 2-methoxy-6-(all-trans-polyprenyl)phenol during ubiquinone biosynthesis. The protein is Ubiquinone biosynthesis protein COQ4, mitochondrial of Candida dubliniensis (strain CD36 / ATCC MYA-646 / CBS 7987 / NCPF 3949 / NRRL Y-17841) (Yeast).